A 249-amino-acid chain; its full sequence is 2,3-bisphosphoglycerate-dependent phosphoglycerate mutase (249 aa).

Substrate contacts are provided by residues Arg11–Asn18, Thr24–Gly25, Arg63, Glu90–Tyr93, Lys101, Arg117–Arg118, and Gly184–Asn185. His12 serves as the catalytic Tele-phosphohistidine intermediate. Glu90 (proton donor/acceptor) is an active-site residue.

This sequence belongs to the phosphoglycerate mutase family. BPG-dependent PGAM subfamily.

The enzyme catalyses (2R)-2-phosphoglycerate = (2R)-3-phosphoglycerate. It participates in carbohydrate degradation; glycolysis; pyruvate from D-glyceraldehyde 3-phosphate: step 3/5. Functionally, catalyzes the interconversion of 2-phosphoglycerate and 3-phosphoglycerate. The protein is 2,3-bisphosphoglycerate-dependent phosphoglycerate mutase of Mycobacterium bovis (strain BCG / Pasteur 1173P2).